A 127-amino-acid chain; its full sequence is Glycine cleavage system H protein (127 aa).

Residues 24–105 (TALVGITDFA…YEDGWMVKVS (82 aa)) form the Lipoyl-binding domain. At K65 the chain carries N6-lipoyllysine.

Belongs to the GcvH family. In terms of assembly, the glycine cleavage system is composed of four proteins: P, T, L and H. It depends on (R)-lipoate as a cofactor.

In terms of biological role, the glycine cleavage system catalyzes the degradation of glycine. The H protein shuttles the methylamine group of glycine from the P protein to the T protein. In Prosthecochloris aestuarii (strain DSM 271 / SK 413), this protein is Glycine cleavage system H protein.